We begin with the raw amino-acid sequence, 117 residues long: Small ribosomal subunit protein bS6 (117 aa).

A disordered region spans residues 92–117 (KVDEHPEGPSIQMQKREERDNRRERR). Positions 105-117 (QKREERDNRRERR) are enriched in basic and acidic residues.

This sequence belongs to the bacterial ribosomal protein bS6 family.

Its function is as follows. Binds together with bS18 to 16S ribosomal RNA. The protein is Small ribosomal subunit protein bS6 of Dinoroseobacter shibae (strain DSM 16493 / NCIMB 14021 / DFL 12).